Consider the following 258-residue polypeptide: Indole-3-glycerol phosphate synthase (258 aa).

This sequence belongs to the TrpC family.

It carries out the reaction 1-(2-carboxyphenylamino)-1-deoxy-D-ribulose 5-phosphate + H(+) = (1S,2R)-1-C-(indol-3-yl)glycerol 3-phosphate + CO2 + H2O. The protein operates within amino-acid biosynthesis; L-tryptophan biosynthesis; L-tryptophan from chorismate: step 4/5. The chain is Indole-3-glycerol phosphate synthase from Campylobacter jejuni (strain RM1221).